Consider the following 94-residue polypeptide: Phosphoribosyl-ATP pyrophosphatase (94 aa).

Belongs to the PRA-PH family.

The protein localises to the cytoplasm. It carries out the reaction 1-(5-phospho-beta-D-ribosyl)-ATP + H2O = 1-(5-phospho-beta-D-ribosyl)-5'-AMP + diphosphate + H(+). Its pathway is amino-acid biosynthesis; L-histidine biosynthesis; L-histidine from 5-phospho-alpha-D-ribose 1-diphosphate: step 2/9. This chain is Phosphoribosyl-ATP pyrophosphatase (hisE), found in Sulfurisphaera tokodaii (strain DSM 16993 / JCM 10545 / NBRC 100140 / 7) (Sulfolobus tokodaii).